The following is a 247-amino-acid chain: 5-oxoprolinase subunit A (247 aa).

Belongs to the LamB/PxpA family. Forms a complex composed of PxpA, PxpB and PxpC.

It carries out the reaction 5-oxo-L-proline + ATP + 2 H2O = L-glutamate + ADP + phosphate + H(+). Catalyzes the cleavage of 5-oxoproline to form L-glutamate coupled to the hydrolysis of ATP to ADP and inorganic phosphate. The protein is 5-oxoprolinase subunit A of Klebsiella pneumoniae subsp. pneumoniae (strain ATCC 700721 / MGH 78578).